Consider the following 60-residue polypeptide: MAVQQNKKSPSKRGMHRSHDALTNPPLAIEPTTGEIHLRHHISPNGYYRGKKVIKTKNDD.

Residues 1-43 are disordered; that stretch reads MAVQQNKKSPSKRGMHRSHDALTNPPLAIEPTTGEIHLRHHIS.

The protein belongs to the bacterial ribosomal protein bL32 family.

The polypeptide is Large ribosomal subunit protein bL32 (Nitrosomonas europaea (strain ATCC 19718 / CIP 103999 / KCTC 2705 / NBRC 14298)).